Reading from the N-terminus, the 368-residue chain is tRNA-specific 2-thiouridylase MnmA (368 aa).

ATP is bound by residues 12–19 (GMSGGVDS) and methionine 38. The segment at 98–100 (NPD) is interaction with target base in tRNA. Cysteine 103 serves as the catalytic Nucleophile. The cysteines at positions 103 and 200 are disulfide-linked. ATP is bound at residue glycine 128. The segment at 150–152 (KDQ) is interaction with tRNA. The active-site Cysteine persulfide intermediate is cysteine 200. Residues 311–312 (RY) are interaction with tRNA.

It belongs to the MnmA/TRMU family.

The protein resides in the cytoplasm. It catalyses the reaction S-sulfanyl-L-cysteinyl-[protein] + uridine(34) in tRNA + AH2 + ATP = 2-thiouridine(34) in tRNA + L-cysteinyl-[protein] + A + AMP + diphosphate + H(+). Functionally, catalyzes the 2-thiolation of uridine at the wobble position (U34) of tRNA, leading to the formation of s(2)U34. In Aeromonas hydrophila subsp. hydrophila (strain ATCC 7966 / DSM 30187 / BCRC 13018 / CCUG 14551 / JCM 1027 / KCTC 2358 / NCIMB 9240 / NCTC 8049), this protein is tRNA-specific 2-thiouridylase MnmA.